A 183-amino-acid polypeptide reads, in one-letter code: uncharacterized protein (183 aa).

This is an uncharacterized protein from Treponema pallidum (strain Nichols).